The following is a 93-amino-acid chain: uncharacterized protein (93 aa).

This is an uncharacterized protein from Treponema pallidum (strain Nichols).